The following is a 403-amino-acid chain: O-succinylhomoserine sulfhydrylase (403 aa).

K219 is subject to N6-(pyridoxal phosphate)lysine.

Belongs to the trans-sulfuration enzymes family. MetZ subfamily. As to quaternary structure, homotetramer. The cofactor is pyridoxal 5'-phosphate.

It carries out the reaction O-succinyl-L-homoserine + hydrogen sulfide = L-homocysteine + succinate. The protein operates within amino-acid biosynthesis; L-methionine biosynthesis via de novo pathway; L-homocysteine from O-succinyl-L-homoserine: step 1/1. In terms of biological role, catalyzes the formation of L-homocysteine from O-succinyl-L-homoserine (OSHS) and hydrogen sulfide. Cannot use the other activated form of L-homoserine, O-acetyl-L-homoserine, as a substrate. The sequence is that of O-succinylhomoserine sulfhydrylase from Pseudomonas aeruginosa (strain ATCC 15692 / DSM 22644 / CIP 104116 / JCM 14847 / LMG 12228 / 1C / PRS 101 / PAO1).